Reading from the N-terminus, the 139-residue chain is Ribulose bisphosphate carboxylase small subunit (139 aa).

This sequence belongs to the RuBisCO small chain family. In terms of assembly, heterohexadecamer of 8 large and 8 small subunits.

It is found in the plastid. Its subcellular location is the chloroplast. Its function is as follows. RuBisCO catalyzes two reactions: the carboxylation of D-ribulose 1,5-bisphosphate, the primary event in carbon dioxide fixation, as well as the oxidative fragmentation of the pentose substrate in the photorespiration process. Both reactions occur simultaneously and in competition at the same active site. Although the small subunit is not catalytic it is essential for maximal activity. In Ectocarpus siliculosus (Brown alga), this protein is Ribulose bisphosphate carboxylase small subunit.